A 293-amino-acid chain; its full sequence is MSLFEGAGVALITPFTEDNQINYEKLEELIEFQIANKTDAIIAAGTTAESATLTPEERMQVIKFCIERTKKRTIVIAGTGTNNTASAVEFSKKSYEYGADMVMAVTPYYNKGNESGLIDYYTQIANSVKCPVIMYSVPSRTGVKLSLNVIKTLSEISNIQGIKEASGDISYVADIVNVAPKLDLYSGNDDMVTPMMALGAKGVISVTSNIIPKENHDMVMNFLNGNVNEAIKTQIKYIDFVRAMFIETNPAPIKEAMNIMGFNVGECRSPLGPLSEKNREHVKNIINKYGLKK.

T47 contacts pyruvate. Residue Y135 is the Proton donor/acceptor of the active site. K163 functions as the Schiff-base intermediate with substrate in the catalytic mechanism. I204 is a pyruvate binding site.

It belongs to the DapA family. In terms of assembly, homotetramer; dimer of dimers.

It localises to the cytoplasm. The catalysed reaction is L-aspartate 4-semialdehyde + pyruvate = (2S,4S)-4-hydroxy-2,3,4,5-tetrahydrodipicolinate + H2O + H(+). It participates in amino-acid biosynthesis; L-lysine biosynthesis via DAP pathway; (S)-tetrahydrodipicolinate from L-aspartate: step 3/4. Its function is as follows. Catalyzes the condensation of (S)-aspartate-beta-semialdehyde [(S)-ASA] and pyruvate to 4-hydroxy-tetrahydrodipicolinate (HTPA). The chain is 4-hydroxy-tetrahydrodipicolinate synthase from Brachyspira hyodysenteriae (strain ATCC 49526 / WA1).